Reading from the N-terminus, the 396-residue chain is Lipid-A-disaccharide synthase (396 aa).

The protein belongs to the LpxB family.

It carries out the reaction a lipid X + a UDP-2-N,3-O-bis[(3R)-3-hydroxyacyl]-alpha-D-glucosamine = a lipid A disaccharide + UDP + H(+). Its pathway is bacterial outer membrane biogenesis; LPS lipid A biosynthesis. Condensation of UDP-2,3-diacylglucosamine and 2,3-diacylglucosamine-1-phosphate to form lipid A disaccharide, a precursor of lipid A, a phosphorylated glycolipid that anchors the lipopolysaccharide to the outer membrane of the cell. The polypeptide is Lipid-A-disaccharide synthase (Acinetobacter baylyi (strain ATCC 33305 / BD413 / ADP1)).